Reading from the N-terminus, the 132-residue chain is S-protein homolog 15 (132 aa).

An N-terminal signal peptide occupies residues 1-20 (MSRLIFFILVTAIYFVGNEA).

It belongs to the plant self-incompatibility (S1) protein family.

Its subcellular location is the secreted. In Arabidopsis thaliana (Mouse-ear cress), this protein is S-protein homolog 15.